The chain runs to 203 residues: Histidine biosynthesis bifunctional protein HisIE (203 aa).

The tract at residues 1-114 (MLTEQQRREL…FGDASHQWLF (114 aa)) is phosphoribosyl-AMP cyclohydrolase. The phosphoribosyl-ATP pyrophosphohydrolase stretch occupies residues 115–203 (LYQLEQLLAE…VIDDLRKRHQ (89 aa)).

The protein in the N-terminal section; belongs to the PRA-CH family. This sequence in the C-terminal section; belongs to the PRA-PH family.

It localises to the cytoplasm. The catalysed reaction is 1-(5-phospho-beta-D-ribosyl)-ATP + H2O = 1-(5-phospho-beta-D-ribosyl)-5'-AMP + diphosphate + H(+). It carries out the reaction 1-(5-phospho-beta-D-ribosyl)-5'-AMP + H2O = 1-(5-phospho-beta-D-ribosyl)-5-[(5-phospho-beta-D-ribosylamino)methylideneamino]imidazole-4-carboxamide. The protein operates within amino-acid biosynthesis; L-histidine biosynthesis; L-histidine from 5-phospho-alpha-D-ribose 1-diphosphate: step 2/9. It functions in the pathway amino-acid biosynthesis; L-histidine biosynthesis; L-histidine from 5-phospho-alpha-D-ribose 1-diphosphate: step 3/9. The polypeptide is Histidine biosynthesis bifunctional protein HisIE (hisI) (Salmonella typhi).